A 512-amino-acid chain; its full sequence is MNELESFSPRHEGHHHAANIKYGYIVLGFSVVHIIGILICKSVFKLRWTTSTKGIDFVKSPLFISIIAWTLILIGLGVFHVQLPENYVTSIKRFGRMSYALLPFDIFLVLRPNSIGLRYLELMDLHKWMSRVIIAGAIIHGVGYFIKWILEGSLFTKSVRLWNFLGIVVFMLNLILIIISLRYFRRRIYQYFYVVHNITVWLFVGLICLHARPGVGKYAIACASLLGLQIFERYAKSHSISDLKVISYEGSNLIVVRIQRDSKIADWPSGSHIRLTYPLTNYRSWIFPTHPYTIASLESDEMLDLIISKSNRFILHPQMPYSWTGPFTSFSKELLQTIDNVDIICGGSGISFALPVFRNLKQKASHVKLIWCVRSNNDLHVLRTLNFNEEIIIHITGNLQDSTSNTIFDEEDYGLLDYDNNENFELESLPSSETPSRTVNDDSLSQDTRPKKESKFIIVQGRPDFGNTFESLVQVNSSNKWIIACGPRSLVNSAQEWASENKVNFVSEIYEM.

A run of 7 helical transmembrane segments spans residues 20–40, 61–81, 97–117, 132–152, 161–181, 191–211, and 218–235; these read IKYGYIVLGFSVVHIIGILIC, PLFISIIAWTLILIGLGVFHV, MSYALLPFDIFLVLRPNSIGL, VIIAGAIIHGVGYFIKWILEG, LWNFLGIVVFMLNLILIIISL, YFYVVHNITVWLFVGLICLHA, and YAIACASLLGLQIFERYA. The Ferric oxidoreductase domain occupies 94–206; the sequence is FGRMSYALLP…NITVWLFVGL (113 aa). Residues 230–355 form the FAD-binding FR-type domain; it reads IFERYAKSHS…GGSGISFALP (126 aa). The segment covering 427-436 has biased composition (low complexity); the sequence is ESLPSSETPS. Residues 427-451 are disordered; the sequence is ESLPSSETPSRTVNDDSLSQDTRPK. The span at 437 to 447 shows a compositional bias: polar residues; it reads RTVNDDSLSQD.

This sequence belongs to the ferric reductase (FRE) family. AIM14 subfamily.

The protein resides in the membrane. Its function is as follows. Probable cell surface metalloreductase. May be involved in iron or copper homeostasis. This chain is Probable metalloreductase AIM14 (AIM14), found in Debaryomyces hansenii (strain ATCC 36239 / CBS 767 / BCRC 21394 / JCM 1990 / NBRC 0083 / IGC 2968) (Yeast).